We begin with the raw amino-acid sequence, 162 residues long: uncharacterized protein (162 aa).

This is an uncharacterized protein from Picosynechococcus sp. (strain ATCC 27264 / PCC 7002 / PR-6) (Agmenellum quadruplicatum).